Reading from the N-terminus, the 63-residue chain is Large ribosomal subunit protein uL30 (63 aa).

Belongs to the universal ribosomal protein uL30 family. In terms of assembly, part of the 50S ribosomal subunit.

The chain is Large ribosomal subunit protein uL30 from Rhodospirillum rubrum (strain ATCC 11170 / ATH 1.1.1 / DSM 467 / LMG 4362 / NCIMB 8255 / S1).